The sequence spans 421 residues: GTPase Obg (421 aa).

The Obg domain maps to 4 to 161; that stretch reads LHFIDEAFNE…FKIKIQLKVL (158 aa). Positions 162 to 327 constitute an OBG-type G domain; it reads ADVGLLGFPS…LKYAIKNLLQ (166 aa). GTP-binding positions include 168–175, 193–197, 214–217, 281–284, and 308–310; these read GFPSVGKS, FTTLF, DLPG, NKMD, and SLI. 2 residues coordinate Mg(2+): S175 and T195. The 79-residue stretch at 343 to 421 folds into the OCT domain; sequence DLNSETQTFT…ICNYLFDFVI (79 aa).

It belongs to the TRAFAC class OBG-HflX-like GTPase superfamily. OBG GTPase family. Monomer. Mg(2+) is required as a cofactor.

It localises to the cytoplasm. In terms of biological role, an essential GTPase which binds GTP, GDP and possibly (p)ppGpp with moderate affinity, with high nucleotide exchange rates and a fairly low GTP hydrolysis rate. Plays a role in control of the cell cycle, stress response, ribosome biogenesis and in those bacteria that undergo differentiation, in morphogenesis control. The polypeptide is GTPase Obg (Phytoplasma australiense).